Consider the following 457-residue polypeptide: Bifunctional protein GlmU (457 aa).

The tract at residues Met1–Arg228 is pyrophosphorylase. Residues Leu9–Gly12, Lys23, Gln73, and Gly78–Thr79 each bind UDP-N-acetyl-alpha-D-glucosamine. Asp102 contacts Mg(2+). The UDP-N-acetyl-alpha-D-glucosamine site is built by Gly139, Glu154, Asn169, and Asn226. Residue Asn226 participates in Mg(2+) binding. The tract at residues Val229–Asn249 is linker. Positions Gly250–Leu457 are N-acetyltransferase. UDP-N-acetyl-alpha-D-glucosamine contacts are provided by Arg331 and Lys349. His361 serves as the catalytic Proton acceptor. UDP-N-acetyl-alpha-D-glucosamine is bound by residues Tyr364 and Asn375. Residues Asn384–Tyr385, Ala421, and Arg438 each bind acetyl-CoA.

In the N-terminal section; belongs to the N-acetylglucosamine-1-phosphate uridyltransferase family. The protein in the C-terminal section; belongs to the transferase hexapeptide repeat family. Homotrimer. It depends on Mg(2+) as a cofactor.

Its subcellular location is the cytoplasm. It carries out the reaction alpha-D-glucosamine 1-phosphate + acetyl-CoA = N-acetyl-alpha-D-glucosamine 1-phosphate + CoA + H(+). The enzyme catalyses N-acetyl-alpha-D-glucosamine 1-phosphate + UTP + H(+) = UDP-N-acetyl-alpha-D-glucosamine + diphosphate. The protein operates within nucleotide-sugar biosynthesis; UDP-N-acetyl-alpha-D-glucosamine biosynthesis; N-acetyl-alpha-D-glucosamine 1-phosphate from alpha-D-glucosamine 6-phosphate (route II): step 2/2. It participates in nucleotide-sugar biosynthesis; UDP-N-acetyl-alpha-D-glucosamine biosynthesis; UDP-N-acetyl-alpha-D-glucosamine from N-acetyl-alpha-D-glucosamine 1-phosphate: step 1/1. It functions in the pathway bacterial outer membrane biogenesis; LPS lipid A biosynthesis. Functionally, catalyzes the last two sequential reactions in the de novo biosynthetic pathway for UDP-N-acetylglucosamine (UDP-GlcNAc). The C-terminal domain catalyzes the transfer of acetyl group from acetyl coenzyme A to glucosamine-1-phosphate (GlcN-1-P) to produce N-acetylglucosamine-1-phosphate (GlcNAc-1-P), which is converted into UDP-GlcNAc by the transfer of uridine 5-monophosphate (from uridine 5-triphosphate), a reaction catalyzed by the N-terminal domain. The protein is Bifunctional protein GlmU of Thermoanaerobacter pseudethanolicus (strain ATCC 33223 / 39E) (Clostridium thermohydrosulfuricum).